The primary structure comprises 579 residues: UvrABC system protein C (579 aa).

Positions 12–89 (DATGVYIFRD…IKRYRPPYNV (78 aa)) constitute a GIY-YIG domain. One can recognise a UVR domain in the interval 193 to 228 (QEVIEVLEEEMKEASERLEFERAARIRDQIESIREV).

The protein belongs to the UvrC family. Interacts with UvrB in an incision complex.

Its subcellular location is the cytoplasm. The UvrABC repair system catalyzes the recognition and processing of DNA lesions. UvrC both incises the 5' and 3' sides of the lesion. The N-terminal half is responsible for the 3' incision and the C-terminal half is responsible for the 5' incision. The protein is UvrABC system protein C of Methanothermobacter thermautotrophicus (strain ATCC 29096 / DSM 1053 / JCM 10044 / NBRC 100330 / Delta H) (Methanobacterium thermoautotrophicum).